Consider the following 359-residue polypeptide: Protein HEXIM1 (359 aa).

The disordered stretch occupies residues 1 to 163 (MAEPFLSEYQ…RRRPSKKKRH (163 aa)). Polar residues predominate over residues 9–19 (YQHQPQTSNCT). Composition is skewed to basic and acidic residues over residues 34 to 47 (PGAE…DSRW) and 84 to 93 (CLREGEKGQN). Phosphoserine occurs at positions 97 and 98. Over residues 148–163 (LGKKKHRRRPSKKKRH) the composition is skewed to basic residues. Residues 150 to 177 (KKKHRRRPSKKKRHWKPYYKLTWEEKKK) are basic region; mediates nuclear localization and interaction with 7SK snRNA and NR3C1. Residues 202-205 (PYNT) form an interaction with P-TEFb region. Positions 210 to 250 (MDDHDQEEPDLKTGLYSKRAAAKSDDTSDDDFMEEGGEEDG) are autoinhibitory acidic region; in absence of 7SK snRNA interacts with the basic region preventing interaction with P-TEFb and modulating subcellular localization. Positions 213–262 (HDQEEPDLKTGLYSKRAAAKSDDTSDDDFMEEGGEEDGGSDGMGGDGSEF) are disordered. S233 bears the Phosphoserine mark. T236 bears the Phosphothreonine mark. Over residues 236–251 (TSDDDFMEEGGEEDGG) the composition is skewed to acidic residues. S237, S252, and S260 each carry phosphoserine. Residues 283-349 (SKQELIKEYL…LTENELHRQQ (67 aa)) adopt a coiled-coil conformation. The mediates interaction with CCNT1 stretch occupies residues 286 to 314 (ELIKEYLELEKCLSRMEDENNRLRLESKR). Positions 310-355 (LESKRLGGDDARVRELELELDRLRAENLQLLTENELHRQQERAPLS) are required for inhibition of ESR1-dependent transcription.

It belongs to the HEXIM family. Homooligomer and heterooligomer with HEXIM2; probably dimeric. Core component of the 7SK RNP complex, at least composed of 7SK RNA, LARP7, MEPCE, HEXIM1 (or HEXIM2) and P-TEFb (composed of CDK9 and CCNT1/cyclin-T1). Interacts with the N-CoR complex through NCOR1. Interacts with ESR1 and NR3C1. May interact with NF-kappa-B through RELA. Interacts with CCNT2; mediates formation of a tripartite complex with KPNA2. Part of the HDP-RNP complex composed of at least HEXIM1, PRKDC, XRCC5, XRCC6, paraspeckle proteins (SFPQ, NONO, PSPC1, RBM14, and MATR3) and NEAT1 non-coding RNA. As to expression, ubiquitously expressed with higher expression in placenta. HEXIM1 and HEXIM2 are differentially expressed. Expressed in endocrine tissues.

The protein localises to the nucleus. It localises to the cytoplasm. Its function is as follows. Transcriptional regulator which functions as a general RNA polymerase II transcription inhibitor. Core component of the 7SK RNP complex: in cooperation with 7SK snRNA sequesters P-TEFb in a large inactive 7SK snRNP complex preventing RNA polymerase II phosphorylation and subsequent transcriptional elongation. May also regulate NF-kappa-B, ESR1, NR3C1 and CIITA-dependent transcriptional activity. Plays a role in the regulation of DNA virus-mediated innate immune response by assembling into the HDP-RNP complex, a complex that serves as a platform for IRF3 phosphorylation and subsequent innate immune response activation through the cGAS-STING pathway. The sequence is that of Protein HEXIM1 (HEXIM1) from Homo sapiens (Human).